The following is an 835-amino-acid chain: Protein translocase subunit SecA 1 (835 aa).

ATP contacts are provided by residues Gln85, 103-107, and Asp492; that span reads GEGKT. The interval 788-807 is disordered; the sequence is VQGEAVHPSSDGEEAKKKPV. Residues Cys819, Cys821, Cys830, and Cys831 each coordinate Zn(2+).

Belongs to the SecA family. As to quaternary structure, monomer and homodimer. Part of the essential Sec protein translocation apparatus which comprises SecA, SecYEG and auxiliary proteins SecDF. Other proteins may also be involved. The cofactor is Zn(2+).

It is found in the cell membrane. It localises to the cytoplasm. The enzyme catalyses ATP + H2O + cellular proteinSide 1 = ADP + phosphate + cellular proteinSide 2.. Part of the Sec protein translocase complex. Interacts with the SecYEG preprotein conducting channel. Has a central role in coupling the hydrolysis of ATP to the transfer of proteins into and across the cell membrane, serving as an ATP-driven molecular motor driving the stepwise translocation of polypeptide chains across the membrane. The sequence is that of Protein translocase subunit SecA 1 from Bacillus thuringiensis subsp. konkukian (strain 97-27).